We begin with the raw amino-acid sequence, 566 residues long: Type 3 secretion system secretin (566 aa).

Positions 1–22 (MKKFNIKSLTLLIVLLPLIVNA) are cleaved as a signal peptide.

The protein belongs to the bacterial secretin family. T3SS SctC subfamily. In terms of assembly, the core secretion machinery of the T3SS is composed of approximately 20 different proteins, including cytoplasmic components, a base, an export apparatus and a needle. This subunit is part of the base, which anchors the injectisome in the bacterial cell envelope. Forms a stable homooligomeric complex. Interacts with the pilotin MxiM/SctG and the inner membrane ring outer protein MxiJ/SctJ.

It localises to the cell outer membrane. Functionally, component of the type III secretion system (T3SS), also called injectisome, which is used to inject bacterial effector proteins into eukaryotic host cells. Forms a ring-shaped multimeric structure with an apparent central pore in the outer membrane. Necessary for the secretion of Ipa invasins. The protein is Type 3 secretion system secretin of Shigella flexneri.